The sequence spans 349 residues: tRNA pseudouridine synthase D (349 aa).

Catalysis depends on Asp77, which acts as the Nucleophile. The 159-residue stretch at Gly151–Leu309 folds into the TRUD domain.

The protein belongs to the pseudouridine synthase TruD family.

It carries out the reaction uridine(13) in tRNA = pseudouridine(13) in tRNA. In terms of biological role, responsible for synthesis of pseudouridine from uracil-13 in transfer RNAs. This is tRNA pseudouridine synthase D from Pseudoalteromonas translucida (strain TAC 125).